Here is a 72-residue protein sequence, read N- to C-terminus: Translation initiation factor IF-1 (72 aa).

Residues 1–72 (MPKEEVLEFP…TKGRITYRFK (72 aa)) enclose the S1-like domain.

This sequence belongs to the IF-1 family. Component of the 30S ribosomal translation pre-initiation complex which assembles on the 30S ribosome in the order IF-2 and IF-3, IF-1 and N-formylmethionyl-tRNA(fMet); mRNA recruitment can occur at any time during PIC assembly.

The protein resides in the cytoplasm. Its function is as follows. One of the essential components for the initiation of protein synthesis. Stabilizes the binding of IF-2 and IF-3 on the 30S subunit to which N-formylmethionyl-tRNA(fMet) subsequently binds. Helps modulate mRNA selection, yielding the 30S pre-initiation complex (PIC). Upon addition of the 50S ribosomal subunit IF-1, IF-2 and IF-3 are released leaving the mature 70S translation initiation complex. This Rhizobium etli (strain ATCC 51251 / DSM 11541 / JCM 21823 / NBRC 15573 / CFN 42) protein is Translation initiation factor IF-1.